The sequence spans 364 residues: Glycosyltransferase 8 domain-containing protein 1 (364 aa).

Over 1-5 the chain is Cytoplasmic; sequence MRRVH. Residues 6-26 form a helical; Signal-anchor for type II membrane protein membrane-spanning segment; the sequence is ITVILLAAVIFLLVLHHNILG. Over 27-364 the chain is Lumenal; it reads LSDILKRQNS…QFSLIRRHAE (338 aa). N-linked (GlcNAc...) asparagine glycans are attached at residues Asn-102, Asn-247, and Asn-255.

It belongs to the glycosyltransferase 8 family.

Its subcellular location is the membrane. In Xenopus laevis (African clawed frog), this protein is Glycosyltransferase 8 domain-containing protein 1 (glt8d1).